Consider the following 298-residue polypeptide: NAD kinase (298 aa).

The Proton acceptor role is filled by Asp-80. NAD(+) is bound by residues 80–81, 154–155, Arg-182, Asp-184, 195–200, Ala-219, and Gln-253; these read DG, ND, and TAYALS.

This sequence belongs to the NAD kinase family. Requires a divalent metal cation as cofactor.

It is found in the cytoplasm. The enzyme catalyses NAD(+) + ATP = ADP + NADP(+) + H(+). Its function is as follows. Involved in the regulation of the intracellular balance of NAD and NADP, and is a key enzyme in the biosynthesis of NADP. Catalyzes specifically the phosphorylation on 2'-hydroxyl of the adenosine moiety of NAD to yield NADP. The protein is NAD kinase of Delftia acidovorans (strain DSM 14801 / SPH-1).